The chain runs to 279 residues: 5'-nucleotidase SurE 1 (279 aa).

A divalent metal cation-binding residues include Asp-12, Asp-13, Ser-45, and Asn-103.

This sequence belongs to the SurE nucleotidase family. It depends on a divalent metal cation as a cofactor.

It is found in the cytoplasm. The catalysed reaction is a ribonucleoside 5'-phosphate + H2O = a ribonucleoside + phosphate. In terms of biological role, nucleotidase that shows phosphatase activity on nucleoside 5'-monophosphates. The polypeptide is 5'-nucleotidase SurE 1 (Chlamydia caviae (strain ATCC VR-813 / DSM 19441 / 03DC25 / GPIC) (Chlamydophila caviae)).